We begin with the raw amino-acid sequence, 442 residues long: Syndecan-3 (442 aa).

Disordered regions lie at residues 1–25 (MKPG…APGA) and 47–80 (RWRN…YSGS). A signal peptide spans 1–44 (MKPGPPRRGTAQGQRVDTATHAPGARGLLLPPLLLLLLAGRAAG). At 45-387 (AQRWRNENFE…SILERKEVLV (343 aa)) the chain is on the extracellular side. Positions 48-58 (WRNENFERPVD) are enriched in basic and acidic residues. The segment covering 61 to 75 (GSGDDDSFPDDELDD) has biased composition (acidic residues). Serine 78, serine 80, serine 82, and serine 89 each carry an O-linked (Xyl...) (glycosaminoglycan) serine glycan. O-linked (GalNAc) threonine; by GALNT13 glycosylation is present at threonine 107. Disordered regions lie at residues 152-199 (ESSQ…PATA), 253-293 (ATSR…AQTP), and 305-327 (EPEV…TTQP). Low complexity-rich tracts occupy residues 157 to 199 (ATTI…PATA) and 276 to 287 (TLPLGTTAPGPT). An O-linked (GalNAc) serine; by GALNT13 glycan is attached at serine 161. Threonine 162, threonine 163, threonine 170, and threonine 172 each carry an O-linked (GalNAc) threonine; by GALNT13 glycan. 2 O-linked (Xyl...) (glycosaminoglycan) serine glycosylation sites follow: serine 315 and serine 367. A helical membrane pass occupies residues 388–408 (AVIVGGVVGALFAAFLVTLLI). Tyrosine 409, tyrosine 419, tyrosine 431, and tyrosine 441 each carry phosphotyrosine. The Cytoplasmic portion of the chain corresponds to 409–442 (YRMKKKDEGSYTLEEPKQASVTYQKPDKQEEFYA). Residues 419–442 (YTLEEPKQASVTYQKPDKQEEFYA) form a disordered region. Positions 433–442 (KPDKQEEFYA) are enriched in basic and acidic residues.

This sequence belongs to the syndecan proteoglycan family. Interacts with TIAM1. Interacts with PTN (via heparan sulfate chains); this interaction mediates the neurite outgrowth-promoting signal from PTN to the cytoskeleton of growing neurites; this interaction mediates osteoblast recruitment. Interacts with MDK; this interaction induces SDC3 clustering; this interaction induces neuronal cell adhesion and neurite outgrowth. O-glycosylated within the Thr/Ser-rich region which could interact with lectin domains on other molecules.

It localises to the cell membrane. Functionally, cell surface proteoglycan that may bear heparan sulfate. May have a role in the organization of cell shape by affecting the actin cytoskeleton, possibly by transferring signals from the cell surface in a sugar-dependent mechanism. The polypeptide is Syndecan-3 (Sdc3) (Mus musculus (Mouse)).